A 1095-amino-acid polypeptide reads, in one-letter code: Inactive phospholipase C-like protein 1 (1095 aa).

A compositionally biased stretch (basic and acidic residues) spans 1 to 11 (MAEGAAGREDP). The tract at residues 1–61 (MAEGAAGRED…PGAAGTPADS (61 aa)) is disordered. Phosphoserine occurs at positions 47 and 77. An interaction with PPP1C region spans residues 83–222 (SNQKCGGRKK…IWVSGLRYLV (140 aa)). Thr-93 is modified (phosphothreonine; by PKA). Ser-95 bears the Phosphoserine mark. In terms of domain architecture, PH spans 113 to 223 (SFMQAGCELK…WVSGLRYLVS (111 aa)). Residues 398-542 (QDMTQPLSHY…LKRMIIVKGK (145 aa)) form the PI-PLC X-box domain. An interaction with GABA A beta subunit region spans residues 543–567 (KLPSDPDVLEGEVTDEDEEAEMSRR). Thr-556 bears the Phosphothreonine mark. Ser-569 carries the phosphoserine modification. A PI-PLC Y-box domain is found at 585-701 (LSDLVSICKS…GYVLRPSIMR (117 aa)). The 130-residue stretch at 701–830 (RDEVSYFSAN…PGYRHVPLRS (130 aa)) folds into the C2 domain. 2 coiled-coil regions span residues 894–914 (LREA…IKEL) and 1034–1059 (LKGQ…QLAC). Residues 1066 to 1095 (KAPSSSAEAKSKRSLEAIEEKESSEENGKL) are disordered. Positions 1074–1095 (AKSKRSLEAIEEKESSEENGKL) are enriched in basic and acidic residues. A Phosphoserine modification is found at Ser-1079.

As to quaternary structure, interacts with PPP2CA. Interacts with Ins(1,4,5)P3, Ins(1,4,5,6)P4, GABARAP, GABA receptor beta subunits, GABA receptor gamma-2 subunits and PPP1C. May form a ternary complex with GABA receptor beta subunit and GABARAP. The formation of a ternary complex with GABA receptor beta subunit and GABARAP could be the key step for facilitating the association of GABARAP with the GABA receptor gamma-2 subunit and to allow it to be transported at the right destination. Post-translationally, phosphorylated by the catalytic subunit of PKA. Phosphorylation of Thr-93 resulted in dissociation of PPP1C from PRIP1. Expressed in a variety of fetal and adult organs including brain, lung and kidney. Its expression was greatly reduced in small and non-small cell lung carcinoma. Isoform 1 is predominantly expressed in brain.

It localises to the cytoplasm. In terms of biological role, involved in an inositol phospholipid-based intracellular signaling cascade. Shows no PLC activity to phosphatidylinositol 4,5-bisphosphate and phosphatidylinositol. Component in the phospho-dependent endocytosis process of GABA A receptor. Regulates the turnover of receptors and thus contributes to the maintenance of GABA-mediated synaptic inhibition. Its aberrant expression could contribute to the genesis and progression of lung carcinoma. Acts as an inhibitor of PPP1C. The sequence is that of Inactive phospholipase C-like protein 1 (PLCL1) from Homo sapiens (Human).